Here is an 841-residue protein sequence, read N- to C-terminus: Outer membrane usher protein MyfC (841 aa).

A signal peptide spans 1–26 (MFFSLKNSVAKLIAFWAICLVLPVWA). Cys-817 and Cys-840 are joined by a disulfide.

It belongs to the fimbrial export usher family.

It localises to the cell outer membrane. In terms of biological role, involved in the export and assembly of the MyfA fimbrial subunit. This chain is Outer membrane usher protein MyfC (myfC), found in Yersinia enterocolitica.